The primary structure comprises 570 residues: Proline--tRNA ligase (570 aa).

Belongs to the class-II aminoacyl-tRNA synthetase family. ProS type 1 subfamily. Homodimer.

Its subcellular location is the cytoplasm. It catalyses the reaction tRNA(Pro) + L-proline + ATP = L-prolyl-tRNA(Pro) + AMP + diphosphate. Its function is as follows. Catalyzes the attachment of proline to tRNA(Pro) in a two-step reaction: proline is first activated by ATP to form Pro-AMP and then transferred to the acceptor end of tRNA(Pro). As ProRS can inadvertently accommodate and process non-cognate amino acids such as alanine and cysteine, to avoid such errors it has two additional distinct editing activities against alanine. One activity is designated as 'pretransfer' editing and involves the tRNA(Pro)-independent hydrolysis of activated Ala-AMP. The other activity is designated 'posttransfer' editing and involves deacylation of mischarged Ala-tRNA(Pro). The misacylated Cys-tRNA(Pro) is not edited by ProRS. The protein is Proline--tRNA ligase of Clostridium perfringens (strain ATCC 13124 / DSM 756 / JCM 1290 / NCIMB 6125 / NCTC 8237 / Type A).